The chain runs to 167 residues: NAD(P)H-quinone oxidoreductase subunit I, chloroplastic (167 aa).

2 4Fe-4S ferredoxin-type domains span residues 55–84 and 95–124; these read GRIH…VDWK and LNYS…MTEE. [4Fe-4S] cluster contacts are provided by Cys-64, Cys-67, Cys-70, Cys-74, Cys-104, Cys-107, Cys-110, and Cys-114.

This sequence belongs to the complex I 23 kDa subunit family. In terms of assembly, NDH is composed of at least 16 different subunits, 5 of which are encoded in the nucleus. It depends on [4Fe-4S] cluster as a cofactor.

The protein localises to the plastid. It is found in the chloroplast thylakoid membrane. The catalysed reaction is a plastoquinone + NADH + (n+1) H(+)(in) = a plastoquinol + NAD(+) + n H(+)(out). The enzyme catalyses a plastoquinone + NADPH + (n+1) H(+)(in) = a plastoquinol + NADP(+) + n H(+)(out). NDH shuttles electrons from NAD(P)H:plastoquinone, via FMN and iron-sulfur (Fe-S) centers, to quinones in the photosynthetic chain and possibly in a chloroplast respiratory chain. The immediate electron acceptor for the enzyme in this species is believed to be plastoquinone. Couples the redox reaction to proton translocation, and thus conserves the redox energy in a proton gradient. In Jasminum nudiflorum (Winter jasmine), this protein is NAD(P)H-quinone oxidoreductase subunit I, chloroplastic.